Consider the following 856-residue polypeptide: DNA mismatch repair protein MutS (856 aa).

Position 609–616 (609–616 (GPNMSGKS)) interacts with ATP.

It belongs to the DNA mismatch repair MutS family.

Functionally, this protein is involved in the repair of mismatches in DNA. It is possible that it carries out the mismatch recognition step. This protein has a weak ATPase activity. This chain is DNA mismatch repair protein MutS, found in Finegoldia magna (strain ATCC 29328 / DSM 20472 / WAL 2508) (Peptostreptococcus magnus).